The primary structure comprises 411 residues: Meiotically up-regulated gene 147 protein (411 aa).

3 disordered regions span residues 1 to 52 (MLAQ…FENK), 102 to 137 (EREE…ELAD), and 156 to 191 (HQHE…HYES). Polar residues predominate over residues 33-43 (TQNESNLQQSE). Basic and acidic residues predominate over residues 156–172 (HQHEDEFSSSNKDKGFT).

Its subcellular location is the cytoplasm. It localises to the nucleus. Has a role in meiosis. The sequence is that of Meiotically up-regulated gene 147 protein (mug147) from Schizosaccharomyces pombe (strain 972 / ATCC 24843) (Fission yeast).